A 372-amino-acid polypeptide reads, in one-letter code: Putative glutamate--cysteine ligase 2 (372 aa).

It belongs to the glutamate--cysteine ligase type 2 family. YbdK subfamily. Homodimer.

It catalyses the reaction L-cysteine + L-glutamate + ATP = gamma-L-glutamyl-L-cysteine + ADP + phosphate + H(+). In terms of biological role, ATP-dependent carboxylate-amine ligase which exhibits weak glutamate--cysteine ligase activity. The chain is Putative glutamate--cysteine ligase 2 (ybdK) from Salmonella typhimurium (strain LT2 / SGSC1412 / ATCC 700720).